The primary structure comprises 666 residues: Protein translocase subunit SecA 2 (666 aa).

Residues glutamine 119, glycine 137–serine 141, and aspartate 546 contribute to the ATP site.

It belongs to the SecA family. In terms of assembly, monomer and homodimer. Part of the essential Sec protein translocation apparatus which comprises SecA, SecYEG and auxiliary proteins SecDF-YajC and YidC.

The protein localises to the cell inner membrane. The protein resides in the cytoplasm. The catalysed reaction is ATP + H2O + cellular proteinSide 1 = ADP + phosphate + cellular proteinSide 2.. Its function is as follows. Part of the Sec protein translocase complex. Interacts with the SecYEG preprotein conducting channel. Has a central role in coupling the hydrolysis of ATP to the transfer of proteins into and across the cell membrane, serving both as a receptor for the preprotein-SecB complex and as an ATP-driven molecular motor driving the stepwise translocation of polypeptide chains across the membrane. The protein is Protein translocase subunit SecA 2 of Nitrosospira multiformis (strain ATCC 25196 / NCIMB 11849 / C 71).